The following is a 493-amino-acid chain: Cell division protein FtsA (493 aa).

The tract at residues 434–468 is disordered; sequence AHQSNPTPHIHSSPTERNLSDLKTPSAPLNTAKND. Polar residues predominate over residues 436–465; sequence QSNPTPHIHSSPTERNLSDLKTPSAPLNTA.

It belongs to the FtsA/MreB family. As to quaternary structure, self-interacts. Interacts with FtsZ.

It localises to the cell inner membrane. In terms of biological role, cell division protein that is involved in the assembly of the Z ring. May serve as a membrane anchor for the Z ring. The chain is Cell division protein FtsA from Helicobacter pylori (strain J99 / ATCC 700824) (Campylobacter pylori J99).